Here is a 90-residue protein sequence, read N- to C-terminus: Small regulatory polypeptide of amino acid response (90 aa).

The Lumenal portion of the chain corresponds to 1–18; sequence MGAKAPRGPKVAQWAMET. Residues 19–39 form a helical membrane-spanning segment; sequence AVIGVVVVLFVVTVAITCVLC. The Cytoplasmic portion of the chain corresponds to 40-90; that stretch reads CFSCDSRAQDPQGGPGRSFTVATFRQEASLFTGPVRHAQPVPSAQDFWTFM.

Interacts with components of the lysosomal V-ATPase complex. Interacts with ATP6V0A1. Interacts with ATP6V0A2. In terms of tissue distribution, highly expressed in lung, heart and skeletal muscle.

The protein localises to the late endosome membrane. It is found in the lysosome membrane. Its function is as follows. Negative regulator of amino acid sensing and mTORC1, a signaling complex promoting cell growth in response to growth factors, energy levels and amino acids. Negatively regulates mTORC1 activation by inhibiting recruitment of mTORC1 to lysosomes upon stimulation with amino acids: acts by promoting the formation of a tightly bound supercomplex composed of the lysosomal V-ATPase, Ragulator and Rag GTPases, preventing recruitment of mTORC1. Acts as a regulator of muscle regeneration following injury by regulating mTORC1 activation. This Homo sapiens (Human) protein is Small regulatory polypeptide of amino acid response.